Consider the following 363-residue polypeptide: mRNA decay activator protein ZFP36L2-A (363 aa).

The RNA-binding motif lies at 131 to 136 (RYKTEL). C3H1-type zinc fingers lie at residues 131–159 (RYKT…HGFH) and 169–197 (KYKT…HNAE). Residues 148-189 (YGEKCQFAHGFHELRSLTRHPKYKTELCRTFHTIGFCPYGPR) form an RNA-binding region. Residues 308-349 (ESPVFDAPPSPPDSLSDRDSYLSGSLSSGSLSGSDSPTLDSN) are disordered. Residues 328–347 (YLSGSLSSGSLSGSDSPTLD) are compositionally biased toward low complexity.

In terms of processing, phosphorylated. Widely expressed in adults.

It is found in the nucleus. It localises to the cytoplasm. Functionally, zinc-finger RNA-binding protein that destabilizes several cytoplasmic AU-rich element (ARE)-containing mRNA transcripts by promoting their poly(A) tail removal or deadenylation, and hence provide a mechanism for attenuating protein synthesis. Acts as a 3'-untranslated region (UTR) ARE mRNA-binding adapter protein to communicate signaling events to the mRNA decay machinery. Functions by recruiting the CCR4-NOT deadenylase complex and probably other components of the cytoplasmic RNA decay machinery to the bound ARE-containing mRNAs, and hence promotes ARE-mediated mRNA deadenylation and decay processes. Binds to 3'-UTR ARE of numerous mRNAs. Also induces the degradation of ARE-containing mRNAs even in absence of poly(A) tail. Required for tubulogenesis during pronephros development. The polypeptide is mRNA decay activator protein ZFP36L2-A (zfp36l2-A) (Xenopus laevis (African clawed frog)).